The primary structure comprises 459 residues: FBD-associated F-box protein At1g61320 (459 aa).

The interval M1–T25 is disordered. The F-box domain maps to K21–I69. The FBD domain maps to V396–M428.

The protein is FBD-associated F-box protein At1g61320 of Arabidopsis thaliana (Mouse-ear cress).